The sequence spans 883 residues: Histidine--tRNA ligase, cytoplasmic (883 aa).

Belongs to the class-II aminoacyl-tRNA synthetase family.

The protein resides in the cytoplasm. It is found in the cytosol. The enzyme catalyses tRNA(His) + L-histidine + ATP = L-histidyl-tRNA(His) + AMP + diphosphate + H(+). The sequence is that of Histidine--tRNA ligase, cytoplasmic from Arabidopsis thaliana (Mouse-ear cress).